The sequence spans 852 residues: DNA mismatch repair protein MutS (852 aa).

Position 602 to 609 (602 to 609 (GPNMSGKS)) interacts with ATP.

It belongs to the DNA mismatch repair MutS family.

Functionally, this protein is involved in the repair of mismatches in DNA. It is possible that it carries out the mismatch recognition step. This protein has a weak ATPase activity. In Streptococcus thermophilus (strain ATCC BAA-491 / LMD-9), this protein is DNA mismatch repair protein MutS.